Consider the following 671-residue polypeptide: Probable potassium transport system protein Kup 2 (671 aa).

A run of 12 helical transmembrane segments spans residues 18 to 38 (GFLIALGIVYGDIGTSPLYAM), 60 to 80 (VSLVIWTLTLITTVKYVLIAL), 103 to 123 (WLIVPAMIGGATLLADGALTP), 149 to 169 (VTTLIILAFLFLIQRFGASLV), 173 to 193 (FGPIMFIWFGFLGVSGLINSF), 218 to 238 (AGFFILGSIFLVTTGAEALYS), 252 to 272 (WPFVKICIILSYCGQGAWLLA), 292 to 312 (MVIYVVILSTLAAIIASQALI), 343 to 363 (LYIPAVNFALWVTTSFFVLYF), 373 to 393 (YSLAITITMLMTTTLLTYFLI), 402 to 422 (IAFISIGLFCIEGSFFAASLV), and 424 to 444 (FINGAYIVVLIALAIIFVMFI).

The protein belongs to the HAK/KUP transporter (TC 2.A.72) family.

It localises to the cell membrane. It catalyses the reaction K(+)(in) + H(+)(in) = K(+)(out) + H(+)(out). In terms of biological role, transport of potassium into the cell. Likely operates as a K(+):H(+) symporter. This Lactococcus lactis subsp. cremoris (strain MG1363) protein is Probable potassium transport system protein Kup 2.